A 461-amino-acid polypeptide reads, in one-letter code: Cysteine--tRNA ligase (461 aa).

Cys-29 lines the Zn(2+) pocket. The 'HIGH' region motif lies at 31 to 41 (MTIYDLCHVGH). Cys-213, His-238, and Glu-242 together coordinate Zn(2+). Residues 274–278 (KMSKS) carry the 'KMSKS' region motif. Lys-277 is an ATP binding site.

It belongs to the class-I aminoacyl-tRNA synthetase family. Monomer. Requires Zn(2+) as cofactor.

The protein resides in the cytoplasm. The enzyme catalyses tRNA(Cys) + L-cysteine + ATP = L-cysteinyl-tRNA(Cys) + AMP + diphosphate. The sequence is that of Cysteine--tRNA ligase from Methylibium petroleiphilum (strain ATCC BAA-1232 / LMG 22953 / PM1).